Reading from the N-terminus, the 527-residue chain is Coiled-coil domain-containing protein 148 (527 aa).

Coiled coils occupy residues L289–K353 and L401–Q438.

The chain is Coiled-coil domain-containing protein 148 (Ccdc148) from Mus musculus (Mouse).